We begin with the raw amino-acid sequence, 274 residues long: Thymidylate synthase (274 aa).

Position 21 (arginine 21) interacts with dUMP. Histidine 51 provides a ligand contact to (6R)-5,10-methylene-5,6,7,8-tetrahydrofolate. Position 123–124 (123–124 (RR)) interacts with dUMP. Cysteine 156 functions as the Nucleophile in the catalytic mechanism. DUMP-binding positions include 176-179 (RSAD), asparagine 187, and 217-219 (HIY). Aspartate 179 contacts (6R)-5,10-methylene-5,6,7,8-tetrahydrofolate. Alanine 273 is a (6R)-5,10-methylene-5,6,7,8-tetrahydrofolate binding site.

This sequence belongs to the thymidylate synthase family. Bacterial-type ThyA subfamily. In terms of assembly, homodimer.

The protein resides in the cytoplasm. It carries out the reaction dUMP + (6R)-5,10-methylene-5,6,7,8-tetrahydrofolate = 7,8-dihydrofolate + dTMP. It participates in pyrimidine metabolism; dTTP biosynthesis. Functionally, catalyzes the reductive methylation of 2'-deoxyuridine-5'-monophosphate (dUMP) to 2'-deoxythymidine-5'-monophosphate (dTMP) while utilizing 5,10-methylenetetrahydrofolate (mTHF) as the methyl donor and reductant in the reaction, yielding dihydrofolate (DHF) as a by-product. This enzymatic reaction provides an intracellular de novo source of dTMP, an essential precursor for DNA biosynthesis. The sequence is that of Thymidylate synthase from Flavobacterium psychrophilum (strain ATCC 49511 / DSM 21280 / CIP 103535 / JIP02/86).